A 321-amino-acid chain; its full sequence is D-alanine--D-alanine ligase (321 aa).

Residues 121–315 (RSWFLTNNIN…FTNLIEEIIK (195 aa)) enclose the ATP-grasp domain. An ATP-binding site is contributed by 147–199 (PMKRPYVIKPLTQGSSIGVEVIFAEDNFNFADYDFPYGDQVIIEQYIKGRELQ). Positions 268, 282, and 284 each coordinate Mg(2+).

The protein belongs to the D-alanine--D-alanine ligase family. Mg(2+) serves as cofactor. It depends on Mn(2+) as a cofactor.

It localises to the cytoplasm. The catalysed reaction is 2 D-alanine + ATP = D-alanyl-D-alanine + ADP + phosphate + H(+). It participates in cell wall biogenesis; peptidoglycan biosynthesis. Its function is as follows. Cell wall formation. This chain is D-alanine--D-alanine ligase, found in Rickettsia massiliae (strain Mtu5).